We begin with the raw amino-acid sequence, 196 residues long: Molybdenum cofactor guanylyltransferase (196 aa).

GTP-binding positions include 10 to 12 (LAG), lysine 23, asparagine 51, aspartate 69, and aspartate 99. Aspartate 99 is a Mg(2+) binding site.

Belongs to the MobA family. Monomer. Mg(2+) serves as cofactor.

The protein resides in the cytoplasm. The enzyme catalyses Mo-molybdopterin + GTP + H(+) = Mo-molybdopterin guanine dinucleotide + diphosphate. Functionally, transfers a GMP moiety from GTP to Mo-molybdopterin (Mo-MPT) cofactor (Moco or molybdenum cofactor) to form Mo-molybdopterin guanine dinucleotide (Mo-MGD) cofactor. This Shewanella amazonensis (strain ATCC BAA-1098 / SB2B) protein is Molybdenum cofactor guanylyltransferase.